We begin with the raw amino-acid sequence, 260 residues long: MQFDVITLFPEMFRALTDWGITSRAAKQQRYALRSWNPRDFTVDNYRTIDDRPYGGGPGMVMLAKPLDDAIDAAVAAQAQAGVAKPHVVLMSPQGKTLTHAKVMELARRPGLVLLCGRYEAIDQRLIDRRVDEEISLGDFVLSGGELPAMALIDAVVRHLPGVLGDAQSAVQDSFVNGLLDCPHYTRPEEYEGVRVPDILLGGHHAEIEKWRRQQALANTASKRPDLIEAAREQGLLTRADEKFLSEWAAKAGRGETPAR.

Residues Gly-117 and 137 to 142 (LGDFVL) each bind S-adenosyl-L-methionine.

The protein belongs to the RNA methyltransferase TrmD family. Homodimer.

The protein localises to the cytoplasm. The enzyme catalyses guanosine(37) in tRNA + S-adenosyl-L-methionine = N(1)-methylguanosine(37) in tRNA + S-adenosyl-L-homocysteine + H(+). Functionally, specifically methylates guanosine-37 in various tRNAs. In Cupriavidus taiwanensis (strain DSM 17343 / BCRC 17206 / CCUG 44338 / CIP 107171 / LMG 19424 / R1) (Ralstonia taiwanensis (strain LMG 19424)), this protein is tRNA (guanine-N(1)-)-methyltransferase.